The primary structure comprises 120 residues: Large ribosomal subunit protein uL22 (120 aa).

It belongs to the universal ribosomal protein uL22 family. In terms of assembly, part of the 50S ribosomal subunit.

In terms of biological role, this protein binds specifically to 23S rRNA; its binding is stimulated by other ribosomal proteins, e.g. L4, L17, and L20. It is important during the early stages of 50S assembly. It makes multiple contacts with different domains of the 23S rRNA in the assembled 50S subunit and ribosome. The globular domain of the protein is located near the polypeptide exit tunnel on the outside of the subunit, while an extended beta-hairpin is found that lines the wall of the exit tunnel in the center of the 70S ribosome. The protein is Large ribosomal subunit protein uL22 of Crocosphaera subtropica (strain ATCC 51142 / BH68) (Cyanothece sp. (strain ATCC 51142)).